A 312-amino-acid polypeptide reads, in one-letter code: MRNSTAVTDFILLGLTSDPQWQVVLFIFLLVTYMLSVTGNLIIITLTLSDPHLQTPMYFFLRNFSFLEISFTSVCIPRFLVTVVTGNRTISYNGCVAQLFFFIFLGVTEFYLLAAMSYDRCMAICKPLHYTIIMSTRVCTLLVFSSWLAGFLIIFPPVMLLLQLDFCASNVIDHFICDSSPMLQLSCTNTHFLELMAFFLAVVTLMVTLTLVILSYTNIIRTILKIPSMSQRKKAFSTCSSHMIVVSISYSSCIFMYIKTSARERVTLSKGVAVLNTSVAPLLNPFIYTLRNKQVKQAFKSMVQKMIFSLNK.

At 1 to 23 the chain is on the extracellular side; sequence MRNSTAVTDFILLGLTSDPQWQV. A glycan (N-linked (GlcNAc...) asparagine) is linked at Asn3. The helical transmembrane segment at 24–44 threads the bilayer; sequence VLFIFLLVTYMLSVTGNLIII. The Cytoplasmic portion of the chain corresponds to 45 to 63; the sequence is TLTLSDPHLQTPMYFFLRN. A helical membrane pass occupies residues 64–84; that stretch reads FSFLEISFTSVCIPRFLVTVV. At 85–95 the chain is on the extracellular side; that stretch reads TGNRTISYNGC. Cysteines 95 and 177 form a disulfide. Residues 96 to 116 traverse the membrane as a helical segment; it reads VAQLFFFIFLGVTEFYLLAAM. At 117–140 the chain is on the cytoplasmic side; it reads SYDRCMAICKPLHYTIIMSTRVCT. The helical transmembrane segment at 141 to 161 threads the bilayer; sequence LLVFSSWLAGFLIIFPPVMLL. The Extracellular segment spans residues 162 to 194; sequence LQLDFCASNVIDHFICDSSPMLQLSCTNTHFLE. Residues 195–215 traverse the membrane as a helical segment; the sequence is LMAFFLAVVTLMVTLTLVILS. Over 216 to 237 the chain is Cytoplasmic; it reads YTNIIRTILKIPSMSQRKKAFS. A helical membrane pass occupies residues 238–258; sequence TCSSHMIVVSISYSSCIFMYI. Topologically, residues 259-269 are extracellular; sequence KTSARERVTLS. Residues 270 to 290 form a helical membrane-spanning segment; sequence KGVAVLNTSVAPLLNPFIYTL. Residues 291 to 312 lie on the Cytoplasmic side of the membrane; it reads RNKQVKQAFKSMVQKMIFSLNK.

It belongs to the G-protein coupled receptor 1 family.

The protein resides in the cell membrane. Odorant receptor. The polypeptide is Olfactory receptor 6C75 (OR6C75) (Homo sapiens (Human)).